The chain runs to 157 residues: MGRFISVSFGLLVVFLSLSGTGADFDCPSDWTAYDQHCYLAIGEPQNWYEAERFCTEQAKDGHLVSIQSREEGNFVAQLVSGFMHRSEIYVWIGLRDRREEQQCNPEWNDGSKIIYVNWKEGESKMCQGLTKWTNFHDWNNINCEDLYPFVCKFSAV.

Residues 1–23 form the signal peptide; that stretch reads MGRFISVSFGLLVVFLSLSGTGA. Cystine bridges form between cysteine 27/cysteine 38, cysteine 55/cysteine 152, and cysteine 127/cysteine 144. In terms of domain architecture, C-type lectin spans 34–153; sequence YDQHCYLAIG…CEDLYPFVCK (120 aa).

It belongs to the snaclec family. As to quaternary structure, heterodimer of subunits A and B; disulfide-linked. As to expression, expressed by the venom gland.

The protein resides in the secreted. Functionally, EMS16 is a potent and selective inhibitor of alpha-2/beta-1 (ITGA2/ITGB1) integrin and acts as a potent antagonist of platelet aggregation and cell migration. Binds specifically to the I domain of the alpha-2 subunit, in a metal ion-independent fashion. This chain is Snaclec EMS16 subunit alpha, found in Echis multisquamatus (Central Asian sand viper).